Here is a 443-residue protein sequence, read N- to C-terminus: 3-phosphoshikimate 1-carboxyvinyltransferase (443 aa).

Residues 1–22 (MSHASRPTPLEARGSTPLTGRV) form a disordered region. 3-phosphoshikimate contacts are provided by Lys28, Ser29, and Arg33. Lys28 lines the phosphoenolpyruvate pocket. Positions 101 and 129 each coordinate phosphoenolpyruvate. 3-phosphoshikimate is bound by residues Ser174, Gln176, Asp326, and Lys353. A phosphoenolpyruvate-binding site is contributed by Gln176. The active-site Proton acceptor is the Asp326. Phosphoenolpyruvate-binding residues include Arg357 and Arg400.

The protein belongs to the EPSP synthase family. In terms of assembly, monomer.

The protein localises to the cytoplasm. The enzyme catalyses 3-phosphoshikimate + phosphoenolpyruvate = 5-O-(1-carboxyvinyl)-3-phosphoshikimate + phosphate. Its pathway is metabolic intermediate biosynthesis; chorismate biosynthesis; chorismate from D-erythrose 4-phosphate and phosphoenolpyruvate: step 6/7. Functionally, catalyzes the transfer of the enolpyruvyl moiety of phosphoenolpyruvate (PEP) to the 5-hydroxyl of shikimate-3-phosphate (S3P) to produce enolpyruvyl shikimate-3-phosphate and inorganic phosphate. This chain is 3-phosphoshikimate 1-carboxyvinyltransferase, found in Afipia carboxidovorans (strain ATCC 49405 / DSM 1227 / KCTC 32145 / OM5) (Oligotropha carboxidovorans).